The sequence spans 35 residues: U1-theraphotoxin-Hs1f (35 aa).

Intrachain disulfides connect Cys3–Cys16, Cys7–Cys27, and Cys21–Cys32.

It belongs to the neurotoxin 12 (Hwtx-2) family. 02 (Hwtx-2) subfamily. Expressed by the venom gland.

It is found in the secreted. Blocks neuromuscular transmission. Acts cooperatively to potentiate the activity of huwentoxin-I. Paralyzes locusts and kills mice following intracerebroventricular injection. In Cyriopagopus schmidti (Chinese bird spider), this protein is U1-theraphotoxin-Hs1f.